The chain runs to 474 residues: Ribulose bisphosphate carboxylase large chain (474 aa).

The substrate site is built by N117 and T167. K169 serves as the catalytic Proton acceptor. Residue K171 participates in substrate binding. Positions 195, 197, and 198 each coordinate Mg(2+). The residue at position 195 (K195) is an N6-carboxylysine. H288 serves as the catalytic Proton acceptor. R289, H321, and S373 together coordinate substrate.

The protein belongs to the RuBisCO large chain family. Type I subfamily. As to quaternary structure, heterohexadecamer of 8 large chains and 8 small chains. The cofactor is Mg(2+).

The enzyme catalyses 2 (2R)-3-phosphoglycerate + 2 H(+) = D-ribulose 1,5-bisphosphate + CO2 + H2O. It catalyses the reaction D-ribulose 1,5-bisphosphate + O2 = 2-phosphoglycolate + (2R)-3-phosphoglycerate + 2 H(+). In terms of biological role, ruBisCO catalyzes two reactions: the carboxylation of D-ribulose 1,5-bisphosphate, the primary event in carbon dioxide fixation, as well as the oxidative fragmentation of the pentose substrate. Both reactions occur simultaneously and in competition at the same active site. The sequence is that of Ribulose bisphosphate carboxylase large chain from Hydrogenophilus thermoluteolus (Pseudomonas hydrogenothermophila).